The following is a 317-amino-acid chain: Tenomodulin (317 aa).

Topologically, residues 1 to 30 (MAKNPPENCEDCHILNAEAFKSKKICKSLK) are cytoplasmic. The chain crosses the membrane as a helical; Signal-anchor for type II membrane protein span at residues 31-50 (ICGLVFGILALTLIVLFWGS). The Extracellular segment spans residues 51 to 317 (KHFWPEVPKK…WWVARMLGRV (267 aa)). The BRICHOS domain occupies 93–186 (GNGTDETLEV…ICDNVTMYWI (94 aa)). An N-linked (GlcNAc...) asparagine glycan is attached at asparagine 94. A disulfide bridge connects residues cysteine 120 and cysteine 178. Asparagine 180 carries an N-linked (GlcNAc...) asparagine glycan. At serine 239 the chain carries Phosphoserine.

This sequence belongs to the chondromodulin-1 family. As to expression, highly expressed in hypovascular connective tissues such as tendons. Also has strong expression in adipose tissue.

It localises to the membrane. The protein localises to the nucleus envelope. The protein resides in the cytoplasm. May be an angiogenesis inhibitor. The sequence is that of Tenomodulin (TNMD) from Homo sapiens (Human).